The primary structure comprises 217 residues: Trimethylamine corrinoid protein 2 (217 aa).

Residues 1–92 (MAGKEEIIAK…EMEKRKAKTT (92 aa)) enclose the B12-binding N-terminal domain. Positions 94–217 (LGTVIIGTIE…VNKIKAAIKS (124 aa)) constitute a B12-binding domain. His-107 contacts methylcob(III)alamin.

It belongs to the methylamine corrinoid protein family. As to quaternary structure, can form a complex with MttB.

Its pathway is one-carbon metabolism; methanogenesis from trimethylamine. Functionally, acts probably as a methyl group carrier between MttB and either MtbA or MtaA. This chain is Trimethylamine corrinoid protein 2 (mttC2), found in Methanosarcina acetivorans (strain ATCC 35395 / DSM 2834 / JCM 12185 / C2A).